The sequence spans 867 residues: Bifunctional diterpene synthase, chloroplastic (867 aa).

The transit peptide at 1–55 (MAKVLFSSFQQTGISGSLKSGQLSGVFINGTNLKSNAHAKRFRKNSTSSITIRCC) directs the protein to the chloroplast. Substrate is bound at residue K255. Mg(2+) contacts are provided by D389 and D391. A DXDD motif motif is present at residues 389–392 (DIDD). K474 serves as a coordination point for substrate. Mg(2+)-binding residues include D611, D615, N758, T762, and E766. The DDXXD motif signature appears at 611-615 (DDLMD).

This sequence belongs to the terpene synthase family. Mg(2+) serves as cofactor.

It is found in the plastid. The protein localises to the chloroplast. The enzyme catalyses (+)-copalyl diphosphate = miltiradiene + diphosphate. The catalysed reaction is (2E,6E,10E)-geranylgeranyl diphosphate = (+)-copalyl diphosphate. It functions in the pathway secondary metabolite biosynthesis; terpenoid biosynthesis. Functionally, bifunctional diterpene cyclase that catalyzes the successive two-step type-B (protonation-initiated cyclization) and type-A (ionization-initiated cyclization) reactions of geranylgeranyl diphosphate (GGDP) producing successively (+)-copalyl diphosphate and miltiradiene. The protein is Bifunctional diterpene synthase, chloroplastic (MDS) of Selaginella moellendorffii (Spikemoss).